We begin with the raw amino-acid sequence, 897 residues long: Isoleucine--tRNA ligase (897 aa).

The short motif at 59–69 (PYANGDIHVGH) is the 'HIGH' region element. Glu-552 is a binding site for L-isoleucyl-5'-AMP. The 'KMSKS' region signature appears at 593 to 597 (KMSKS). An ATP-binding site is contributed by Lys-596. Zn(2+)-binding residues include Cys-872, Cys-875, Cys-890, and Cys-893.

It belongs to the class-I aminoacyl-tRNA synthetase family. IleS type 1 subfamily. As to quaternary structure, monomer. It depends on Zn(2+) as a cofactor.

The protein resides in the cytoplasm. The catalysed reaction is tRNA(Ile) + L-isoleucine + ATP = L-isoleucyl-tRNA(Ile) + AMP + diphosphate. Catalyzes the attachment of isoleucine to tRNA(Ile). As IleRS can inadvertently accommodate and process structurally similar amino acids such as valine, to avoid such errors it has two additional distinct tRNA(Ile)-dependent editing activities. One activity is designated as 'pretransfer' editing and involves the hydrolysis of activated Val-AMP. The other activity is designated 'posttransfer' editing and involves deacylation of mischarged Val-tRNA(Ile). This Mycoplasmoides gallisepticum (strain R(low / passage 15 / clone 2)) (Mycoplasma gallisepticum) protein is Isoleucine--tRNA ligase.